Here is an 873-residue protein sequence, read N- to C-terminus: Zinc fingers and homeoboxes protein 1 (873 aa).

The segment at 1-63 (MASRRKSTTP…ESVDSDNQQN (63 aa)) is disordered. Residues 18-30 (QDPDLELISDLDE) show a composition bias toward acidic residues. T36 is modified (phosphothreonine). Residues S45, S47, and S48 each carry the phosphoserine modification. 2 C2H2-type zinc fingers span residues 70-93 (YECKYCTFQTPDLNMFTFHVDSEH) and 102-125 (YVCVECNFLTKRYDALSEHNLKYH). Residue K159 forms a Glycyl lysine isopeptide (Lys-Gly) (interchain with G-Cter in SUMO2) linkage. A Phosphoserine modification is found at S202. Positions 202-236 (SVEDVPEEKENEIKPDREEIVENPSSSASESNTST) are disordered. The span at 212 to 221 (NEIKPDREEI) shows a compositional bias: basic and acidic residues. Positions 223–236 (ENPSSSASESNTST) are enriched in low complexity. Residues 272–432 (NSNLIPKVLI…QNNVQKSQVP (161 aa)) form a required for dimerization region. The segment at 272 to 564 (NSNLIPKVLI…AQPKQSWNPF (293 aa)) is required for interaction with NFYA. The segment at residues 284-346 (NSIPTYNAAL…LKHGVSWTPE (63 aa)) is a DNA-binding region (homeobox 1). Residues K441, K454, K485, and K629 each participate in a glycyl lysine isopeptide (Lys-Gly) (interchain with G-Cter in SUMO2) cross-link. DNA-binding regions (homeobox) lie at residues 464-526 (SFGI…KSNQ) and 569-630 (PQKF…EEKM). Disordered regions lie at residues 626 to 667 (KEEK…ICKK) and 732 to 769 (SSMNGLSSLRKRGRGRPKGRGRGRPRGRPRGSKRINNW). Residue S648 is modified to Phosphoserine. Residues 660-722 (STGKICKKTP…YAWKNGNLKW (63 aa)) constitute a DNA-binding region (homeobox 4). Residues 734 to 768 (MNGLSSLRKRGRGRPKGRGRGRPRGRPRGSKRINN) form a required for nuclear localization region. The span at 740-764 (LRKRGRGRPKGRGRGRPRGRPRGSK) shows a compositional bias: basic residues. S774 bears the Phosphoserine mark. Residues 777–832 (KFKTGTAILKDYYLKHKFLNEQDLDELVNKSHMGYEQVREWFAERQRRSELGIELF) constitute a DNA-binding region (homeobox 5). The disordered stretch occupies residues 829 to 873 (IELFEENEEEDEVIDDQEEDEEETDDSDTWEPPRHVKRKLSKSDD). Residues 831-857 (LFEENEEEDEVIDDQEEDEEETDDSDT) are compositionally biased toward acidic residues. Positions 831–873 (LFEENEEEDEVIDDQEEDEEETDDSDTWEPPRHVKRKLSKSDD) are required for repressor activity. Positions 863-873 (HVKRKLSKSDD) are enriched in basic residues.

Belongs to the ZHX family. In terms of assembly, forms homodimers. Also forms heterodimers with ZHX3 which is a prerequisite for repressor activity and with ZHX2. Interacts with NFYA. Interacts with ATF7IP.

The protein resides in the nucleus. Acts as a transcriptional repressor. The sequence is that of Zinc fingers and homeoboxes protein 1 (ZHX1) from Gorilla gorilla gorilla (Western lowland gorilla).